Reading from the N-terminus, the 416-residue chain is MAPAEDFDPKPRRASVAVDVGGVIVGGGAPVVVQSMTNTDTADIDGTVAQVAALHKAGSEIVRITVDRDESAAAVPKIRDRLERLGLDVPLIGDFHYIGHKLLADHPACAEALAKYRINPGNVGFKDKKDKQFADIIEMAIRYDKPVRIGVNWGSLDQELLTQLMDENQAKGFPLSARQVTREAICQSALLSAELAEEIGLSRNRIILSAKVSQVQDLIAVYSMLASRSDHALHLGLTEAGMGSKGIVASSAAMGYVLQQGIGDTIRVSLTPEPNGDRTREVQVAQELLQVMGFRQFIPVVAACPGCGRTTSTVFQELAQKIQSDIRKNMPVWREKYPGVEGLNVAVMGCIVNGPGESKHADIGISLPGTGENPAAPVFIDGEKALTLRGPKIAEDFEALVIDYIEKRYGQRSAAE.

Residues cysteine 304, cysteine 307, cysteine 350, and glutamate 357 each coordinate [4Fe-4S] cluster.

It belongs to the IspG family. The cofactor is [4Fe-4S] cluster.

It catalyses the reaction (2E)-4-hydroxy-3-methylbut-2-enyl diphosphate + oxidized [flavodoxin] + H2O + 2 H(+) = 2-C-methyl-D-erythritol 2,4-cyclic diphosphate + reduced [flavodoxin]. It participates in isoprenoid biosynthesis; isopentenyl diphosphate biosynthesis via DXP pathway; isopentenyl diphosphate from 1-deoxy-D-xylulose 5-phosphate: step 5/6. Functionally, converts 2C-methyl-D-erythritol 2,4-cyclodiphosphate (ME-2,4cPP) into 1-hydroxy-2-methyl-2-(E)-butenyl 4-diphosphate. This Allorhizobium ampelinum (strain ATCC BAA-846 / DSM 112012 / S4) (Agrobacterium vitis (strain S4)) protein is 4-hydroxy-3-methylbut-2-en-1-yl diphosphate synthase (flavodoxin).